Consider the following 652-residue polypeptide: Threonine--tRNA ligase (652 aa).

One can recognise a TGS domain in the interval 1–61 (MIKLKLPDGS…DRDAEVEIVT (61 aa)). The segment at 243 to 548 (DHRKIGREMD…LIENYEGRFP (306 aa)) is catalytic. Zn(2+) contacts are provided by Cys-348, His-399, and His-525.

The protein belongs to the class-II aminoacyl-tRNA synthetase family. Homodimer. Zn(2+) serves as cofactor.

The protein localises to the cytoplasm. The catalysed reaction is tRNA(Thr) + L-threonine + ATP = L-threonyl-tRNA(Thr) + AMP + diphosphate + H(+). Functionally, catalyzes the attachment of threonine to tRNA(Thr) in a two-step reaction: L-threonine is first activated by ATP to form Thr-AMP and then transferred to the acceptor end of tRNA(Thr). Also edits incorrectly charged L-seryl-tRNA(Thr). The chain is Threonine--tRNA ligase from Parvibaculum lavamentivorans (strain DS-1 / DSM 13023 / NCIMB 13966).